Here is a 244-residue protein sequence, read N- to C-terminus: Ribonuclease PH (244 aa).

Residues R86 and 124-126 (GTR) contribute to the phosphate site.

The protein belongs to the RNase PH family. In terms of assembly, homohexameric ring arranged as a trimer of dimers.

The enzyme catalyses tRNA(n+1) + phosphate = tRNA(n) + a ribonucleoside 5'-diphosphate. Its function is as follows. Phosphorolytic 3'-5' exoribonuclease that plays an important role in tRNA 3'-end maturation. Removes nucleotide residues following the 3'-CCA terminus of tRNAs; can also add nucleotides to the ends of RNA molecules by using nucleoside diphosphates as substrates, but this may not be physiologically important. Probably plays a role in initiation of 16S rRNA degradation (leading to ribosome degradation) during starvation. This chain is Ribonuclease PH, found in Glaesserella parasuis serovar 5 (strain SH0165) (Haemophilus parasuis).